Consider the following 100-residue polypeptide: Urease subunit gamma (100 aa).

This sequence belongs to the urease gamma subunit family. In terms of assembly, heterotrimer of UreA (gamma), UreB (beta) and UreC (alpha) subunits. Three heterotrimers associate to form the active enzyme.

The protein localises to the cytoplasm. It catalyses the reaction urea + 2 H2O + H(+) = hydrogencarbonate + 2 NH4(+). The protein operates within nitrogen metabolism; urea degradation; CO(2) and NH(3) from urea (urease route): step 1/1. This chain is Urease subunit gamma, found in Prochlorococcus marinus (strain NATL1A).